Reading from the N-terminus, the 875-residue chain is Alanine--tRNA ligase (875 aa).

Zn(2+) contacts are provided by histidine 564, histidine 568, cysteine 666, and histidine 670.

This sequence belongs to the class-II aminoacyl-tRNA synthetase family. As to quaternary structure, homotetramer. The cofactor is Zn(2+).

It is found in the cytoplasm. It catalyses the reaction tRNA(Ala) + L-alanine + ATP = L-alanyl-tRNA(Ala) + AMP + diphosphate. Functionally, catalyzes the attachment of alanine to tRNA(Ala) in a two-step reaction: alanine is first activated by ATP to form Ala-AMP and then transferred to the acceptor end of tRNA(Ala). Also edits incorrectly charged Ser-tRNA(Ala) and Gly-tRNA(Ala) via its editing domain. The chain is Alanine--tRNA ligase from Yersinia enterocolitica serotype O:8 / biotype 1B (strain NCTC 13174 / 8081).